The primary structure comprises 30 residues: Antifungal protein Lap (30 aa).

Its function is as follows. Displays antifungal activity against M.arachidicola and P.piricola, but not against R.solani, C.gossypii and C.comatus. Inhibits mycelial growth in P.piricola with an IC(50) of 70 nM. Displays very low cell-free translation inhibitory activity in a rabbit reticulocyte lysate system (IC(50)=70 uM) but is able to inhibit HIV-1 reverse transcriptase activity (IC(50)=5.2 nM). The protein is Antifungal protein Lap of Lyophyllum shimeji (Hon-shimeji).